Here is a 286-residue protein sequence, read N- to C-terminus: Ribosomal RNA small subunit methyltransferase H (286 aa).

S-adenosyl-L-methionine-binding positions include 17–19 (AGH), Asp-36, Phe-63, Asp-84, and Gln-91.

Belongs to the methyltransferase superfamily. RsmH family.

It is found in the cytoplasm. The catalysed reaction is cytidine(1402) in 16S rRNA + S-adenosyl-L-methionine = N(4)-methylcytidine(1402) in 16S rRNA + S-adenosyl-L-homocysteine + H(+). Specifically methylates the N4 position of cytidine in position 1402 (C1402) of 16S rRNA. The polypeptide is Ribosomal RNA small subunit methyltransferase H (Metamycoplasma arthritidis (strain 158L3-1) (Mycoplasma arthritidis)).